Reading from the N-terminus, the 258-residue chain is Imidazole glycerol phosphate synthase subunit HisF (258 aa).

Residues D11 and D130 contribute to the active site.

The protein belongs to the HisA/HisF family. In terms of assembly, heterodimer of HisH and HisF.

The protein localises to the cytoplasm. It carries out the reaction 5-[(5-phospho-1-deoxy-D-ribulos-1-ylimino)methylamino]-1-(5-phospho-beta-D-ribosyl)imidazole-4-carboxamide + L-glutamine = D-erythro-1-(imidazol-4-yl)glycerol 3-phosphate + 5-amino-1-(5-phospho-beta-D-ribosyl)imidazole-4-carboxamide + L-glutamate + H(+). The protein operates within amino-acid biosynthesis; L-histidine biosynthesis; L-histidine from 5-phospho-alpha-D-ribose 1-diphosphate: step 5/9. In terms of biological role, IGPS catalyzes the conversion of PRFAR and glutamine to IGP, AICAR and glutamate. The HisF subunit catalyzes the cyclization activity that produces IGP and AICAR from PRFAR using the ammonia provided by the HisH subunit. The polypeptide is Imidazole glycerol phosphate synthase subunit HisF (Prochlorococcus marinus (strain MIT 9211)).